A 525-amino-acid polypeptide reads, in one-letter code: GMP synthase [glutamine-hydrolyzing] (525 aa).

One can recognise a Glutamine amidotransferase type-1 domain in the interval 9-207 (RILILDFGSQ…VRDICQCEAL (199 aa)). The Nucleophile role is filled by C86. Catalysis depends on residues H181 and E183. The GMPS ATP-PPase domain occupies 208–400 (WTPAKIIDDA…LGLPYDMLYR (193 aa)). 235–241 (SGGVDSS) is a binding site for ATP.

Homodimer.

The enzyme catalyses XMP + L-glutamine + ATP + H2O = GMP + L-glutamate + AMP + diphosphate + 2 H(+). Its pathway is purine metabolism; GMP biosynthesis; GMP from XMP (L-Gln route): step 1/1. Its function is as follows. Catalyzes the synthesis of GMP from XMP. The sequence is that of GMP synthase [glutamine-hydrolyzing] from Shigella flexneri.